The sequence spans 146 residues: Large ribosomal subunit protein uL15 (146 aa).

The tract at residues methionine 1–phenylalanine 66 is disordered. 2 stretches are compositionally biased toward gly residues: residues glutamine 21–alanine 31 and serine 42–glycine 52.

Belongs to the universal ribosomal protein uL15 family. Part of the 50S ribosomal subunit.

Binds to the 23S rRNA. This Pelotomaculum thermopropionicum (strain DSM 13744 / JCM 10971 / SI) protein is Large ribosomal subunit protein uL15.